A 223-amino-acid chain; its full sequence is Uracil-DNA glycosylase (223 aa).

The Proton acceptor role is filled by aspartate 67.

It belongs to the uracil-DNA glycosylase (UDG) superfamily. UNG family.

The protein resides in the cytoplasm. It carries out the reaction Hydrolyzes single-stranded DNA or mismatched double-stranded DNA and polynucleotides, releasing free uracil.. Its function is as follows. Excises uracil residues from the DNA which can arise as a result of misincorporation of dUMP residues by DNA polymerase or due to deamination of cytosine. The polypeptide is Uracil-DNA glycosylase (Borrelia duttonii (strain Ly)).